The sequence spans 311 residues: DNA-directed RNA polymerase subunit alpha (311 aa).

The interval 1–227 is alpha N-terminal domain (alpha-NTD); the sequence is MAQFQIECVE…NLFCSLRNLD (227 aa). Residues 242-311 form an alpha C-terminal domain (alpha-CTD) region; that stretch reads ISQVLIEELQ…GISLPKEKTD (70 aa).

It belongs to the RNA polymerase alpha chain family. As to quaternary structure, in plastids the minimal PEP RNA polymerase catalytic core is composed of four subunits: alpha, beta, beta', and beta''. When a (nuclear-encoded) sigma factor is associated with the core the holoenzyme is formed, which can initiate transcription.

The protein resides in the plastid. Its subcellular location is the chloroplast. It catalyses the reaction RNA(n) + a ribonucleoside 5'-triphosphate = RNA(n+1) + diphosphate. DNA-dependent RNA polymerase catalyzes the transcription of DNA into RNA using the four ribonucleoside triphosphates as substrates. The chain is DNA-directed RNA polymerase subunit alpha from Porphyra purpurea (Red seaweed).